The following is a 129-amino-acid chain: Follitropin subunit beta (129 aa).

An N-terminal signal peptide occupies residues 1 to 18 (MKSVQFCFLFCCWRAICC). Disulfide bonds link Cys21–Cys69, Cys35–Cys84, Cys38–Cys122, Cys46–Cys100, Cys50–Cys102, and Cys105–Cys112. Asn25 and Asn42 each carry an N-linked (GlcNAc...) asparagine glycan.

This sequence belongs to the glycoprotein hormones subunit beta family. In terms of assembly, heterodimer. The active follitropin is a heterodimer composed of an alpha chain/CGA shared with other hormones and a unique beta chain/FSHB shown here.

The protein localises to the secreted. In terms of biological role, together with the alpha chain CGA constitutes follitropin, the follicle-stimulating hormone, and provides its biological specificity to the hormone heterodimer. Binds FSHR, a G protein-coupled receptor, on target cells to activate downstream signaling pathways. Follitropin is involved in follicle development and spermatogenesis in reproductive organs. The protein is Follitropin subunit beta (FSHB) of Capra hircus (Goat).